Reading from the N-terminus, the 216-residue chain is Protein Syd (216 aa).

Belongs to the Syd family.

It localises to the cell inner membrane. Functionally, interacts with the SecY protein in vivo. May bind preferentially to an uncomplexed state of SecY, thus functioning either as a chelating agent for excess SecY in the cell or as a regulatory factor that negatively controls the translocase function. The polypeptide is Protein Syd (Shewanella baltica (strain OS155 / ATCC BAA-1091)).